A 159-amino-acid chain; its full sequence is Trafficking protein particle complex subunit 6A (159 aa).

The residue at position 33 (Ser33) is a Phosphoserine.

This sequence belongs to the TRAPP small subunits family. BET3 subfamily. As to quaternary structure, part of the multisubunit transport protein particle (TRAPP) complex. Heterodimer with TRAPPC3. The heterodimer TRAPPC3-TRAPPC6A interacts with TRAPPC2L. Interacts with TRAPPC2L.

It localises to the golgi apparatus. The protein localises to the cis-Golgi network. The protein resides in the endoplasmic reticulum. Functionally, may play a role in vesicular transport during the biogenesis of melanosomes. This Bos taurus (Bovine) protein is Trafficking protein particle complex subunit 6A.